Here is a 253-residue protein sequence, read N- to C-terminus: Glutamate racemase (253 aa).

Substrate is bound by residues 7 to 8 (DS) and 39 to 40 (YG). Cys-70 serves as the catalytic Proton donor/acceptor. 71–72 (NS) provides a ligand contact to substrate. Cys-179 acts as the Proton donor/acceptor in catalysis. A substrate-binding site is contributed by 180 to 181 (TH).

Belongs to the aspartate/glutamate racemases family.

The enzyme catalyses L-glutamate = D-glutamate. The protein operates within cell wall biogenesis; peptidoglycan biosynthesis. Functionally, provides the (R)-glutamate required for cell wall biosynthesis. The polypeptide is Glutamate racemase (Nitratiruptor sp. (strain SB155-2)).